Consider the following 644-residue polypeptide: uncharacterized protein (644 aa).

The segment at 65 to 117 (DSDVETTGGGGRGSTTSTEDRIDEHDDAIEDDGVSNEEDENQDAEQEQEVDLN) is disordered. The segment covering 89 to 114 (HDDAIEDDGVSNEEDENQDAEQEQEV) has biased composition (acidic residues).

This is an uncharacterized protein from Arabidopsis thaliana (Mouse-ear cress).